Consider the following 132-residue polypeptide: Agouti-signaling protein (132 aa).

The N-terminal stretch at 1 to 22 (MDVTRLLLATLLVFLCFFTANS) is a signal peptide. N-linked (GlcNAc...) asparagine glycosylation occurs at Asn39. A disordered region spans residues 61 to 87 (QIGRKEAEKKRSSKKEASMKKVARPRT). Residues 63 to 79 (GRKEAEKKRSSKKEASM) show a composition bias toward basic and acidic residues. Disulfide bonds link Cys93/Cys108, Cys100/Cys114, Cys107/Cys125, Cys111/Cys132, and Cys116/Cys123. One can recognise an Agouti domain in the interval 93–132 (CVATRNSCKPPAPACCDPCASCQCRFFRSACSCRVLSLNC).

The protein localises to the secreted. In terms of biological role, involved in the regulation of melanogenesis. The binding of ASP to MC1R precludes alpha-MSH initiated signaling and thus blocks production of cAMP, leading to a down-regulation of eumelanogenesis (brown/black pigment) and thus increasing synthesis of pheomelanin (yellow/red pigment). In Gorilla gorilla gorilla (Western lowland gorilla), this protein is Agouti-signaling protein (ASIP).